The following is a 224-amino-acid chain: 7-cyano-7-deazaguanine synthase (224 aa).

8–18 (VSGGADSATVL) lines the ATP pocket. Cysteine 189, cysteine 199, cysteine 202, and cysteine 205 together coordinate Zn(2+).

This sequence belongs to the QueC family. It depends on Zn(2+) as a cofactor.

It carries out the reaction 7-carboxy-7-deazaguanine + NH4(+) + ATP = 7-cyano-7-deazaguanine + ADP + phosphate + H2O + H(+). It functions in the pathway purine metabolism; 7-cyano-7-deazaguanine biosynthesis. Catalyzes the ATP-dependent conversion of 7-carboxy-7-deazaguanine (CDG) to 7-cyano-7-deazaguanine (preQ(0)). This Rickettsia felis (strain ATCC VR-1525 / URRWXCal2) (Rickettsia azadi) protein is 7-cyano-7-deazaguanine synthase.